The chain runs to 323 residues: Putative ABC transporter substrate-binding lipoprotein YhfQ (323 aa).

An N-terminal signal peptide occupies residues 1–19; that stretch reads MKKTLIILTVLLLSVLTAA. Residue C20 is the site of N-palmitoyl cysteine attachment. C20 is lipidated: S-diacylglycerol cysteine. A Fe/B12 periplasmic-binding domain is found at 51-322; sequence RVVVLELGFI…ELQKEMPAAK (272 aa).

The protein belongs to the bacterial solute-binding protein 8 family. In terms of assembly, interacts with FloT.

It is found in the cell membrane. It localises to the membrane raft. The polypeptide is Putative ABC transporter substrate-binding lipoprotein YhfQ (yhfQ) (Bacillus subtilis (strain 168)).